Here is a 346-residue protein sequence, read N- to C-terminus: Elongation factor Ts (346 aa).

The tract at residues 80 to 83 is involved in Mg(2+) ion dislocation from EF-Tu; it reads TDFV.

This sequence belongs to the EF-Ts family.

The protein localises to the cytoplasm. Functionally, associates with the EF-Tu.GDP complex and induces the exchange of GDP to GTP. It remains bound to the aminoacyl-tRNA.EF-Tu.GTP complex up to the GTP hydrolysis stage on the ribosome. The sequence is that of Elongation factor Ts from Streptococcus pneumoniae (strain 70585).